Consider the following 120-residue polypeptide: UPF0145 protein Bcenmc03_5217 (120 aa).

The protein belongs to the UPF0145 family.

The chain is UPF0145 protein Bcenmc03_5217 from Burkholderia orbicola (strain MC0-3).